An 85-amino-acid chain; its full sequence is Putative membrane protein insertion efficiency factor (85 aa).

This sequence belongs to the UPF0161 family.

The protein localises to the cell inner membrane. Could be involved in insertion of integral membrane proteins into the membrane. In Enterobacter sp. (strain 638), this protein is Putative membrane protein insertion efficiency factor.